The primary structure comprises 233 residues: Lactate utilization protein C (233 aa).

Belongs to the LutC/YkgG family.

Functionally, is involved in L-lactate degradation and allows cells to grow with lactate as the sole carbon source. In Oceanobacillus iheyensis (strain DSM 14371 / CIP 107618 / JCM 11309 / KCTC 3954 / HTE831), this protein is Lactate utilization protein C.